A 267-amino-acid polypeptide reads, in one-letter code: Thymidylate synthase (267 aa).

Arg-24 serves as a coordination point for dUMP. Residue His-54 coordinates (6R)-5,10-methylene-5,6,7,8-tetrahydrofolate. 129 to 130 (RR) is a dUMP binding site. The active-site Nucleophile is Cys-149. DUMP is bound by residues 169-172 (RSAD), Asn-180, and 210-212 (HVY). Asp-172 is a binding site for (6R)-5,10-methylene-5,6,7,8-tetrahydrofolate. Position 266 (Ala-266) interacts with (6R)-5,10-methylene-5,6,7,8-tetrahydrofolate.

It belongs to the thymidylate synthase family. Bacterial-type ThyA subfamily. As to quaternary structure, homodimer.

Its subcellular location is the cytoplasm. It carries out the reaction dUMP + (6R)-5,10-methylene-5,6,7,8-tetrahydrofolate = 7,8-dihydrofolate + dTMP. Its pathway is pyrimidine metabolism; dTTP biosynthesis. Functionally, catalyzes the reductive methylation of 2'-deoxyuridine-5'-monophosphate (dUMP) to 2'-deoxythymidine-5'-monophosphate (dTMP) while utilizing 5,10-methylenetetrahydrofolate (mTHF) as the methyl donor and reductant in the reaction, yielding dihydrofolate (DHF) as a by-product. This enzymatic reaction provides an intracellular de novo source of dTMP, an essential precursor for DNA biosynthesis. The chain is Thymidylate synthase from Paenarthrobacter aurescens (strain TC1).